The following is a 116-amino-acid chain: Large ribosomal subunit protein bL19 (116 aa).

Belongs to the bacterial ribosomal protein bL19 family.

This protein is located at the 30S-50S ribosomal subunit interface and may play a role in the structure and function of the aminoacyl-tRNA binding site. The chain is Large ribosomal subunit protein bL19 from Flavobacterium johnsoniae (strain ATCC 17061 / DSM 2064 / JCM 8514 / BCRC 14874 / CCUG 350202 / NBRC 14942 / NCIMB 11054 / UW101) (Cytophaga johnsonae).